The chain runs to 231 residues: Ribosomal RNA large subunit methyltransferase E (231 aa).

The S-adenosyl-L-methionine site is built by Gly-76, Trp-78, Asp-99, Asp-115, and Asp-139. Lys-179 functions as the Proton acceptor in the catalytic mechanism.

It belongs to the class I-like SAM-binding methyltransferase superfamily. RNA methyltransferase RlmE family.

It is found in the cytoplasm. It carries out the reaction uridine(2552) in 23S rRNA + S-adenosyl-L-methionine = 2'-O-methyluridine(2552) in 23S rRNA + S-adenosyl-L-homocysteine + H(+). In terms of biological role, specifically methylates the uridine in position 2552 of 23S rRNA at the 2'-O position of the ribose in the fully assembled 50S ribosomal subunit. This Bradyrhizobium sp. (strain ORS 278) protein is Ribosomal RNA large subunit methyltransferase E.